The sequence spans 628 residues: Vacuolar-sorting receptor 3 (628 aa).

The signal sequence occupies residues 1–24 (MKQLLCYLPWLLLLTLLVSPLNDA). The Lumenal segment spans residues 25-569 (RFVVEKNSLS…SKTGAQVRSA (545 aa)). Positions 56–168 (QYGGSMAGTV…GFGEKLKKAI (113 aa)) constitute a PA domain. N-linked (GlcNAc...) asparagine glycosylation is found at asparagine 148, asparagine 294, and asparagine 434. EGF-like domains lie at 416-466 (ESNE…SHCE) and 469-516 (GPGR…KKCE). Cystine bridges form between cysteine 420–cysteine 438, cysteine 427–cysteine 447, cysteine 449–cysteine 465, cysteine 473–cysteine 493, cysteine 480–cysteine 501, cysteine 503–cysteine 515, and cysteine 545–cysteine 558. Residues 517–559 (DINECKEKKACQCPECSCKNTWGSYECSCSGDLLYIRDHDTCI) enclose the EGF-like 3; calcium-binding domain. Residues 570-590 (WAAVWLIMLSLGLAAAGAYLV) traverse the membrane as a helical segment. The Cytoplasmic segment spans residues 591-628 (YKYRLRQYMDSEIRAIMAQYMPLDSQPEIPNHVNDERA). The Tyrosine-based internalization motif signature appears at 610-613 (YMPL).

Belongs to the VSR (BP-80) family. Expressed in seeds, seedlings, roots, leaves, flowers and siliques.

Its subcellular location is the membrane. The protein resides in the golgi apparatus membrane. It is found in the cytoplasmic vesicle. It localises to the clathrin-coated vesicle membrane. The protein localises to the prevacuolar compartment membrane. In terms of biological role, vacuolar-sorting receptor (VSR) involved in clathrin-coated vesicles sorting from Golgi apparatus to vacuoles. In Arabidopsis thaliana (Mouse-ear cress), this protein is Vacuolar-sorting receptor 3 (VSR3).